We begin with the raw amino-acid sequence, 460 residues long: Methionine aminopeptidase 2-1 (460 aa).

The interval 1-90 (MGSKSPNGED…SAQAAQQTAP (90 aa)) is disordered. Over residues 30 to 39 (SAAASGLLRG) the composition is skewed to low complexity. Residues 42-52 (EDQDEDGDDDE) are compositionally biased toward acidic residues. Residues 69–81 (TKKRRRNNKKKKS) show a composition bias toward basic residues. His-212 is a substrate binding site. Residues Asp-233, Asp-244, and His-313 each contribute to the a divalent metal cation site. Position 321 (His-321) interacts with substrate. A divalent metal cation contacts are provided by Glu-346 and Glu-441.

Belongs to the peptidase M24A family. Methionine aminopeptidase eukaryotic type 2 subfamily. Co(2+) serves as cofactor. Requires Zn(2+) as cofactor. The cofactor is Mn(2+). It depends on Fe(2+) as a cofactor.

It localises to the cytoplasm. It catalyses the reaction Release of N-terminal amino acids, preferentially methionine, from peptides and arylamides.. Its function is as follows. Cotranslationally removes the N-terminal methionine from nascent proteins. The N-terminal methionine is often cleaved when the second residue in the primary sequence is small and uncharged (Met-Ala-, Cys, Gly, Pro, Ser, Thr, or Val). The chain is Methionine aminopeptidase 2-1 from Leptosphaeria maculans (strain JN3 / isolate v23.1.3 / race Av1-4-5-6-7-8) (Blackleg fungus).